Reading from the N-terminus, the 372-residue chain is MALNDFHVSEPYTLGIELEMQVINPPGYDLSQDSSTLIDAVKPQLTAGEIKHDITESMLEMATGVCRDIDQAAAQLSAMQHVILQAASEHHLGICGGGTHPFQKWQRQEVCDNERYQRTLENFGYLIQQATVFGQHVHVGCANGDDAIYLLHGLSHFVPHFIALSAASPYMQGSDTRFACARLNIFSAFPDNGPMPWVSNWQEFAGLFRRLSYTTMIDSIKDLHWDIRPSPAFGTVEVRVMDTPLTLDHAINMAGLIQATAHWLLTERPFKPQEQDYLLYKFNRFQACRYGLEGVLTDVYTGDRRRLADDTLRLLDNVTPSARKLGADSAIDALRLQVKKGGNEAQYMREFIADGGSLIGLVQKHCEIWTGQ.

This sequence belongs to the glutamate--cysteine ligase type 2 family. YbdK subfamily. In terms of assembly, homodimer.

The enzyme catalyses L-cysteine + L-glutamate + ATP = gamma-L-glutamyl-L-cysteine + ADP + phosphate + H(+). ATP-dependent carboxylate-amine ligase which exhibits weak glutamate--cysteine ligase activity. The polypeptide is Putative glutamate--cysteine ligase 2 (ybdK) (Salmonella agona (strain SL483)).